The following is a 265-amino-acid chain: MKIAIAGASGRMGRMLIEAVLNDADAQLVGALDRAGSPFLGQDAGAFLGKDTGVKLTDDLDAVFAQAEYLIDFTRPEGTMAHIEAALRHDVKLVIGTTGFTAEQKADLQAAAARIGIVFAANMSVGVNVTLKLLEFAAQHFSHGYDIEIIEAHHRHKVDAPSGTALMMGEAVAGALGRSLDDCAVYGRHGVTGERDPSSIGFAAVRGGDIVGDHTVLFAGIGERIEITHKSSSRVSYAQGALRAVRFLSARGAGLFDMQDVLGLR.

NAD(+) is bound by residues 7-12 (GASGRM) and Asp-33. Arg-34 is an NADP(+) binding site. Residues 96 to 98 (GTT) and 120 to 123 (AANM) contribute to the NAD(+) site. Catalysis depends on His-153, which acts as the Proton donor/acceptor. His-154 is a binding site for (S)-2,3,4,5-tetrahydrodipicolinate. Lys-157 serves as the catalytic Proton donor. Residue 163–164 (GT) coordinates (S)-2,3,4,5-tetrahydrodipicolinate.

The protein belongs to the DapB family.

The protein localises to the cytoplasm. The catalysed reaction is (S)-2,3,4,5-tetrahydrodipicolinate + NAD(+) + H2O = (2S,4S)-4-hydroxy-2,3,4,5-tetrahydrodipicolinate + NADH + H(+). It catalyses the reaction (S)-2,3,4,5-tetrahydrodipicolinate + NADP(+) + H2O = (2S,4S)-4-hydroxy-2,3,4,5-tetrahydrodipicolinate + NADPH + H(+). Its pathway is amino-acid biosynthesis; L-lysine biosynthesis via DAP pathway; (S)-tetrahydrodipicolinate from L-aspartate: step 4/4. Catalyzes the conversion of 4-hydroxy-tetrahydrodipicolinate (HTPA) to tetrahydrodipicolinate. The chain is 4-hydroxy-tetrahydrodipicolinate reductase from Burkholderia orbicola (strain AU 1054).